A 463-amino-acid chain; its full sequence is RuvB-like 2 (463 aa).

Alanine 2 carries the post-translational modification N-acetylalanine. Residue lysine 9 forms a Glycyl lysine isopeptide (Lys-Gly) (interchain with G-Cter in SUMO2) linkage. Position 77–84 (77–84) interacts with ATP; the sequence is GQPGTGKT. Serine 437 bears the Phosphoserine mark. Glycyl lysine isopeptide (Lys-Gly) (interchain with G-Cter in SUMO2) cross-links involve residues lysine 444 and lysine 456.

This sequence belongs to the RuvB family. As to quaternary structure, forms homohexameric rings. Can form a dodecamer with RUVBL1 made of two stacked hexameric rings; however, even though RUVBL1 and RUVBL2 are present in equimolar ratio, the oligomeric status of each hexamer is not known. Oligomerization may regulate binding to nucleic acids and conversely, binding to nucleic acids may affect the dodecameric assembly. Interaction of the complex with DHX34 results in conformational changes of the N-terminus of the RUVBL2 subunits, resulting in loss of nucleotide binding ability and ATP hydrolysis of the complex. Interacts with the transcriptional activation domain of MYC. Interacts with ATF2. Component of the RNA polymerase II holoenzyme complex. May also act to bridge the LEF1/TCF1-CTNNB1 complex and TBP. Component of the NuA4 histone acetyltransferase complex which contains the catalytic subunit KAT5/TIP60 and the subunits EP400, TRRAP/PAF400, BRD8/SMAP, EPC1, DMAP1/DNMAP1, RUVBL1/TIP49, RUVBL2, ING3, actin, ACTL6A/BAF53A, MORF4L1/MRG15, MORF4L2/MRGX, MRGBP, YEATS4/GAS41, VPS72/YL1 and MEAF6. The NuA4 complex interacts with MYC and the adenovirus E1A protein. RUVBL2 interacts with EP400. Component of a NuA4-related complex which contains EP400, TRRAP/PAF400, SRCAP, BRD8/SMAP, EPC1, DMAP1/DNMAP1, RUVBL1/TIP49, RUVBL2, actin, ACTL6A/BAF53A, VPS72 and YEATS4/GAS41. Interacts with NPAT. Component of the chromatin-remodeling INO80 complex; specifically part of a complex module associated with the helicase ATP-binding and the helicase C-terminal domain of INO80. Component of some MLL1/MLL complex, at least composed of the core components KMT2A/MLL1, ASH2L, HCFC1/HCF1, WDR5 and RBBP5, as well as the facultative components BACC1, CHD8, E2F6, HSP70, INO80C, KANSL1, LAS1L, MAX, MCRS1, MGA, MYST1/MOF, PELP1, PHF20, PRP31, RING2, RUVB1/TIP49A, RUVB2/TIP49B, SENP3, TAF1, TAF4, TAF6, TAF7, TAF9 and TEX10. Interacts with IGHMBP2. Interacts with TELO2. Interacts with HINT1. Component of a SWR1-like complex. Component of the R2TP complex composed at least of RUVBL1, RUVBL2, RPAP3 and PIHD1. Component of the PAQosome complex which is responsible for the biogenesis of several protein complexes and which consists of R2TP complex members RUVBL1, RUVBL2, RPAP3 and PIH1D1, URI complex members PFDN2, PFDN6, PDRG1, UXT and URI1 as well as ASDURF, POLR2E and DNAAF10/WDR92. Interacts with ITFG1. Interacts with ZMYND10. Interacts with WAC; WAC positively regulates MTOR activity by promoting the assembly of the TTT complex composed of TELO2, TTI1 and TTI2 and the RUVBL complex composed of RUVBL1 and RUVBL2 into the TTT-RUVBL complex which leads to the dimerization of the mTORC1 complex and its subsequent activation. Forms a complex with APPL1 and APPL2. Interacts with ZNHIT2 (via HIT-type zinc finger) in the presence of ATP or ADP; shows a stronger interaction in the presence of ADP. The RUVBL1/RUVBL2 complex interacts with ZNHIT1 (via HIT-type zinc finger), ZNHIT3 (via HIT-type zinc finger), ZNHIT6 (via HIT-type zinc finger) and DDX59/ZNHIT5 (via HIT-type zinc finger) in the presence of ADP. Interacts with NOPCHAP1; the interaction is direct and disrupted upon ATP binding. Interacts with SMG1. (Microbial infection) Interacts with Mumps L polymerase; this interaction regulates the viral transcription. In terms of tissue distribution, ubiquitously expressed. Highly expressed in testis and thymus.

The protein localises to the nucleus matrix. The protein resides in the nucleus. It is found in the nucleoplasm. Its subcellular location is the cytoplasm. It localises to the membrane. The protein localises to the dynein axonemal particle. It catalyses the reaction ATP + H2O = ADP + phosphate + H(+). In terms of biological role, possesses single-stranded DNA-stimulated ATPase and ATP-dependent DNA helicase (5' to 3') activity; hexamerization is thought to be critical for ATP hydrolysis and adjacent subunits in the ring-like structure contribute to the ATPase activity. Component of the NuA4 histone acetyltransferase complex which is involved in transcriptional activation of select genes principally by acetylation of nucleosomal histones H4 and H2A. This modification may both alter nucleosome -DNA interactions and promote interaction of the modified histones with other proteins which positively regulate transcription. This complex may be required for the activation of transcriptional programs associated with oncogene and proto-oncogene mediated growth induction, tumor suppressor mediated growth arrest and replicative senescence, apoptosis, and DNA repair. The NuA4 complex ATPase and helicase activities seem to be, at least in part, contributed by the association of RUVBL1 and RUVBL2 with EP400. NuA4 may also play a direct role in DNA repair when recruited to sites of DNA damage. Component of a SWR1-like complex that specifically mediates the removal of histone H2A.Z/H2AZ1 from the nucleosome. Proposed core component of the chromatin remodeling INO80 complex which exhibits DNA- and nucleosome-activated ATPase activity and catalyzes ATP-dependent nucleosome sliding. Plays an essential role in oncogenic transformation by MYC and also modulates transcriptional activation by the LEF1/TCF1-CTNNB1 complex. May also inhibit the transcriptional activity of ATF2. Involved in the endoplasmic reticulum (ER)-associated degradation (ERAD) pathway where it negatively regulates expression of ER stress response genes. May play a role in regulating the composition of the U5 snRNP complex. This chain is RuvB-like 2 (RUVBL2), found in Homo sapiens (Human).